The chain runs to 420 residues: Sulfate adenylyltransferase (420 aa).

A2 carries the N-acetylalanine modification.

The protein belongs to the sulfate adenylyltransferase family. The cofactor is Mg(2+).

The enzyme catalyses sulfate + ATP + H(+) = adenosine 5'-phosphosulfate + diphosphate. The protein operates within sulfur metabolism; hydrogen sulfide biosynthesis; sulfite from sulfate: step 1/3. Its activity is regulated as follows. Inhibited by adenosine 5'-phosphosulfate (APS), but not by 3'phosphoadenosine 5'-phosphosulfate (PAPS). Inhibited by AMP, ADP, CTP, GTP, ITP, UTP and anions other than those in group IV. In Pyropia yezoensis (Susabi-nori), this protein is Sulfate adenylyltransferase.